The sequence spans 329 residues: Glyceraldehyde-3-phosphate dehydrogenase 1 (329 aa).

Residues 11–12 (RI), Asp-33, and Glu-77 each bind NAD(+). Ser-148 carries the post-translational modification Phosphoserine. D-glyceraldehyde 3-phosphate is bound at residue 148 to 150 (SCT). The Nucleophile role is filled by Cys-149. The residue at position 177 (Ser-177) is a Phosphoserine. Thr-179 contacts D-glyceraldehyde 3-phosphate. Ser-200 carries the phosphoserine modification. D-glyceraldehyde 3-phosphate contacts are provided by residues 208–209 (TG) and Arg-231. Asn-313 provides a ligand contact to NAD(+).

Belongs to the glyceraldehyde-3-phosphate dehydrogenase family. Homotetramer.

The protein localises to the cytoplasm. It carries out the reaction D-glyceraldehyde 3-phosphate + phosphate + NAD(+) = (2R)-3-phospho-glyceroyl phosphate + NADH + H(+). Its pathway is carbohydrate degradation; glycolysis; pyruvate from D-glyceraldehyde 3-phosphate: step 1/5. This Kluyveromyces marxianus (Yeast) protein is Glyceraldehyde-3-phosphate dehydrogenase 1.